Reading from the N-terminus, the 140-residue chain is ATP synthase epsilon chain (140 aa).

It belongs to the ATPase epsilon chain family. In terms of assembly, F-type ATPases have 2 components, CF(1) - the catalytic core - and CF(0) - the membrane proton channel. CF(1) has five subunits: alpha(3), beta(3), gamma(1), delta(1), epsilon(1). CF(0) has three main subunits: a, b and c.

The protein localises to the cell inner membrane. Its function is as follows. Produces ATP from ADP in the presence of a proton gradient across the membrane. The polypeptide is ATP synthase epsilon chain (Nitrosomonas europaea (strain ATCC 19718 / CIP 103999 / KCTC 2705 / NBRC 14298)).